Here is a 528-residue protein sequence, read N- to C-terminus: Sensory rhodopsin I transducer (528 aa).

2 helical membrane-spanning segments follow: residues 11 to 31 (GAKL…VGVV) and 35 to 55 (VAST…INAA). HAMP domains lie at 55-107 (AETV…DRLS) and 142-195 (TAYQ…ETIE). Residues 214 to 455 (TSRRVQQEVD…ATADSIADVT (242 aa)) form the Methyl-accepting transducer domain. E259 bears the Glutamate methyl ester (Glu) mark.

This sequence belongs to the methyl-accepting chemotaxis (MCP) protein family. In terms of assembly, interacts with Sop1.

The protein localises to the cell membrane. Functionally, transduces signals from the phototaxis receptor sensory rhodopsin I (Sop1). In Haloarcula marismortui (strain ATCC 43049 / DSM 3752 / JCM 8966 / VKM B-1809) (Halobacterium marismortui), this protein is Sensory rhodopsin I transducer (htr1).